The following is a 288-amino-acid chain: N-acetylneuraminate lyase (288 aa).

Serine 44 and threonine 45 together coordinate aceneuramate. Catalysis depends on tyrosine 133, which acts as the Proton donor. Lysine 161 acts as the Schiff-base intermediate with substrate in catalysis. Aceneuramate contacts are provided by threonine 163, glycine 185, aspartate 187, glutamate 188, and serine 204.

The protein belongs to the DapA family. NanA subfamily. As to quaternary structure, homotetramer.

The protein localises to the cytoplasm. It carries out the reaction aceneuramate = aldehydo-N-acetyl-D-mannosamine + pyruvate. Its pathway is amino-sugar metabolism; N-acetylneuraminate degradation; D-fructose 6-phosphate from N-acetylneuraminate: step 1/5. Catalyzes the reversible aldol cleavage of N-acetylneuraminic acid (sialic acid; Neu5Ac) to form pyruvate and N-acetylmannosamine (ManNAc) via a Schiff base intermediate. The polypeptide is N-acetylneuraminate lyase (Clostridium perfringens (strain ATCC 13124 / DSM 756 / JCM 1290 / NCIMB 6125 / NCTC 8237 / Type A)).